Reading from the N-terminus, the 151-residue chain is Small ribosomal subunit protein uS19 (151 aa).

The protein belongs to the universal ribosomal protein uS19 family.

Its function is as follows. Protein S19 forms a complex with S13 that binds strongly to the 16S ribosomal RNA. This is Small ribosomal subunit protein uS19 from Picrophilus torridus (strain ATCC 700027 / DSM 9790 / JCM 10055 / NBRC 100828 / KAW 2/3).